Reading from the N-terminus, the 61-residue chain is Probable tautomerase LMOf2365_2536 (61 aa).

The active-site Proton acceptor; via imino nitrogen is the P2.

This sequence belongs to the 4-oxalocrotonate tautomerase family.

In Listeria monocytogenes serotype 4b (strain F2365), this protein is Probable tautomerase LMOf2365_2536.